Consider the following 1668-residue polypeptide: DNA polymerase (1668 aa).

2 consecutive DOD-type homing endonuclease domains span residues 739–872 (LLGY…SLGV) and 1191–1330 (LIGL…LVGV).

Belongs to the DNA polymerase type-B family. This protein undergoes a protein self splicing that involves a post-translational excision of the intervening region (intein) followed by peptide ligation.

It catalyses the reaction DNA(n) + a 2'-deoxyribonucleoside 5'-triphosphate = DNA(n+1) + diphosphate. In addition to polymerase activity, this DNA polymerase exhibits 3' to 5' exonuclease activity. Its function is as follows. PI-ThyI and PI-ThyII are endonucleases. PI-ThyI cleaves the inteinless sequence of the Thy DNA pol gene. It requires a 21-bp minimal recognition sequence. This chain is DNA polymerase (pol), found in Thermococcus hydrothermalis.